The chain runs to 345 residues: Biotin synthase (345 aa).

Positions 66–293 constitute a Radical SAM core domain; it reads NTVQLSTLLS…RAMVRLSAGR (228 aa). [4Fe-4S] cluster contacts are provided by Cys81, Cys85, and Cys88. Positions 125, 156, 216, and 288 each coordinate [2Fe-2S] cluster.

It belongs to the radical SAM superfamily. Biotin synthase family. Homodimer. It depends on [4Fe-4S] cluster as a cofactor. Requires [2Fe-2S] cluster as cofactor.

It carries out the reaction (4R,5S)-dethiobiotin + (sulfur carrier)-SH + 2 reduced [2Fe-2S]-[ferredoxin] + 2 S-adenosyl-L-methionine = (sulfur carrier)-H + biotin + 2 5'-deoxyadenosine + 2 L-methionine + 2 oxidized [2Fe-2S]-[ferredoxin]. Its pathway is cofactor biosynthesis; biotin biosynthesis; biotin from 7,8-diaminononanoate: step 2/2. Functionally, catalyzes the conversion of dethiobiotin (DTB) to biotin by the insertion of a sulfur atom into dethiobiotin via a radical-based mechanism. This is Biotin synthase from Cupriavidus metallidurans (strain ATCC 43123 / DSM 2839 / NBRC 102507 / CH34) (Ralstonia metallidurans).